The following is a 436-amino-acid chain: Serine--tRNA ligase (436 aa).

Thr-242–Glu-244 contributes to the L-serine binding site. Arg-273–Glu-275 lines the ATP pocket. Glu-296 lines the L-serine pocket. An ATP-binding site is contributed by Glu-360–Ser-363. Residue Ser-395 participates in L-serine binding.

The protein belongs to the class-II aminoacyl-tRNA synthetase family. Type-1 seryl-tRNA synthetase subfamily. As to quaternary structure, homodimer. The tRNA molecule binds across the dimer.

The protein localises to the cytoplasm. It catalyses the reaction tRNA(Ser) + L-serine + ATP = L-seryl-tRNA(Ser) + AMP + diphosphate + H(+). It carries out the reaction tRNA(Sec) + L-serine + ATP = L-seryl-tRNA(Sec) + AMP + diphosphate + H(+). It participates in aminoacyl-tRNA biosynthesis; selenocysteinyl-tRNA(Sec) biosynthesis; L-seryl-tRNA(Sec) from L-serine and tRNA(Sec): step 1/1. Its function is as follows. Catalyzes the attachment of serine to tRNA(Ser). Is also able to aminoacylate tRNA(Sec) with serine, to form the misacylated tRNA L-seryl-tRNA(Sec), which will be further converted into selenocysteinyl-tRNA(Sec). This Polynucleobacter necessarius subsp. necessarius (strain STIR1) protein is Serine--tRNA ligase.